Consider the following 292-residue polypeptide: 4-hydroxy-tetrahydrodipicolinate synthase (292 aa).

A pyruvate-binding site is contributed by Thr45. Tyr133 functions as the Proton donor/acceptor in the catalytic mechanism. Catalysis depends on Lys161, which acts as the Schiff-base intermediate with substrate. Pyruvate is bound at residue Ile203.

It belongs to the DapA family. In terms of assembly, homotetramer; dimer of dimers.

It localises to the cytoplasm. It carries out the reaction L-aspartate 4-semialdehyde + pyruvate = (2S,4S)-4-hydroxy-2,3,4,5-tetrahydrodipicolinate + H2O + H(+). It participates in amino-acid biosynthesis; L-lysine biosynthesis via DAP pathway; (S)-tetrahydrodipicolinate from L-aspartate: step 3/4. In terms of biological role, catalyzes the condensation of (S)-aspartate-beta-semialdehyde [(S)-ASA] and pyruvate to 4-hydroxy-tetrahydrodipicolinate (HTPA). In Vibrio vulnificus (strain CMCP6), this protein is 4-hydroxy-tetrahydrodipicolinate synthase.